The sequence spans 88 residues: Small ribosomal subunit protein bS18 (88 aa).

This sequence belongs to the bacterial ribosomal protein bS18 family. As to quaternary structure, part of the 30S ribosomal subunit. Forms a tight heterodimer with protein bS6.

In terms of biological role, binds as a heterodimer with protein bS6 to the central domain of the 16S rRNA, where it helps stabilize the platform of the 30S subunit. This Aliarcobacter butzleri (strain RM4018) (Arcobacter butzleri) protein is Small ribosomal subunit protein bS18.